Here is a 97-residue protein sequence, read N- to C-terminus: Co-chaperonin GroES (97 aa).

It belongs to the GroES chaperonin family. Heptamer of 7 subunits arranged in a ring. Interacts with the chaperonin GroEL.

It localises to the cytoplasm. Functionally, together with the chaperonin GroEL, plays an essential role in assisting protein folding. The GroEL-GroES system forms a nano-cage that allows encapsulation of the non-native substrate proteins and provides a physical environment optimized to promote and accelerate protein folding. GroES binds to the apical surface of the GroEL ring, thereby capping the opening of the GroEL channel. The chain is Co-chaperonin GroES from Tolumonas auensis (strain DSM 9187 / NBRC 110442 / TA 4).